The following is a 509-amino-acid chain: MLALMDDIQSAVFACVAVVIAIYAVRWYTDPINSIPTVGGSSLPGLSLLTAWRTVHNCREVLTAGYRKYPDSVFKIAMFDSWLVIASGRNMIEEVRKRHDELSTTLGIQEALRSRYIRDRQVMTDEYHVRVVKEKMSGRTLQAMLPDVIEEVSIAVKDHIATQGSGWTSLEVVPAMQKVIFQVNNRAFVGPVLCRSKEYLNVAIDFSEHTFKWSAILSVTPEFVRRIIAPFINEAKNDTRRAVPLLRPIIEERMKAQADLGEGWHDKPNDILQFVLDKAIPKEESMFLIVHRLLIVNHAASGNSVNAITYVLYHLAENPDILQACREEAEAKIAADGWTSTALANMWRLDSILRETLRYHGTALVSMNRLATKDVVLSDGTRLPKGTFMQAAAYPLHRDGALVENAHTFDPFRYARMRDADGEGLKHQASTTSPEYIPFGHGQHACPGRYFAAYVLKAILAHLIVNYDLKLGGDGSRPPIRYVLSAVLPPPGGCVLLKERGEGSTTTTG.

The chain crosses the membrane as a helical span at residues 12–29; sequence VFACVAVVIAIYAVRWYT. Residue Cys-446 participates in heme binding.

The protein belongs to the cytochrome P450 family. Heme is required as a cofactor.

The protein resides in the membrane. It catalyses the reaction ganoderate DM + reduced [NADPH--hemoprotein reductase] + O2 = hainanate A + oxidized [NADPH--hemoprotein reductase] + H2O + H(+). The catalysed reaction is ganoderate TR + reduced [NADPH--hemoprotein reductase] + O2 = ganoderate Jc + oxidized [NADPH--hemoprotein reductase] + H2O + H(+). It participates in secondary metabolite biosynthesis; terpenoid biosynthesis. Cytochrome P450 monooxygenase that hydroxylates the ganoderic acids DM and TR at the C-23 position to produce hainanic acid A and ganoderic acid Jc, respectively. The polypeptide is Cytochrome P450 monooxygenase CYP512U6 (Ganoderma lucidum (Ling zhi medicinal fungus)).